A 147-amino-acid polypeptide reads, in one-letter code: MKVIFQQDVKGKGKKGEVKNVSEGYARNYLIPNGLAVEATSANMKNLNAKKKSEEKKKEEELQEAKAYQTELEALTLELKAKSGEGGRLFGAISTKQIAEALSREGKKVDKRKILLNDPIRSLGYTNVPIKIHPEVTATVKVHVVEE.

This sequence belongs to the bacterial ribosomal protein bL9 family.

Functionally, binds to the 23S rRNA. The polypeptide is Large ribosomal subunit protein bL9 (Halalkalibacterium halodurans (strain ATCC BAA-125 / DSM 18197 / FERM 7344 / JCM 9153 / C-125) (Bacillus halodurans)).